The primary structure comprises 491 residues: MPALMVVGCTSHAGKSLITAAICRLLRRQGWRVAPFKGQNMALNAYVTASGGEIGYAQAFQAWAAGVEPTIEMNPILLKPQGDMTSQVVLKGRAVGRTLAERYYQDYFEVGWEAICEALEQLQADYDWIVCEGAGSPAEINLKHRDLTNLRVAKHLQAPTLLLVDIDRGGSFAHLIGTLELLDPDERSLIRGFVFNKFRGRRELLQSGLDWLEERTGIPVLGVIPWIDRAFPSEDSLDLMERRRRKTQAEVTIAVIRLPRIANFTDFDPLESEPSVQVRYVGLQDELGYPDAVILPGSKTTISDLLDLQRSGLAQAIRDYAAAGGTVLGICGGFQMMGQHILDLEGTEGIEGQFEGLHLFPTQTWFTAEKTLRQRQTTARSPQAGLPITGYEIHQGQTRLDSDSEEFLPIFDDPKLGLCDRNGNLWGTYLHGIFDNGAWRRAWLNSLRHRRGLKALPTSIGHYQAQRDDLIDALADAVEPYLNLSPLLTAL.

A GATase cobBQ-type domain is found at 250–439; that stretch reads EVTIAVIRLP…LHGIFDNGAW (190 aa). The active-site Nucleophile is C331. H431 is an active-site residue.

Belongs to the CobB/CobQ family. CobQ subfamily.

It functions in the pathway cofactor biosynthesis; adenosylcobalamin biosynthesis. Catalyzes amidations at positions B, D, E, and G on adenosylcobyrinic A,C-diamide. NH(2) groups are provided by glutamine, and one molecule of ATP is hydrogenolyzed for each amidation. The chain is Cobyric acid synthase from Synechococcus elongatus (strain ATCC 33912 / PCC 7942 / FACHB-805) (Anacystis nidulans R2).